The sequence spans 647 residues: Phosphatidylinositol polyphosphate 5-phosphatase type IV (647 aa).

Disordered stretches follow at residues 1 to 80, 101 to 131, and 177 to 196; these read MPSK…QPPI, RGSQEDLTVQNGASPCRGSLQDSVAQSPAYS, and HRDAASGGPPSRLASLHASH. Repeat 1 spans residues 52-55; sequence PMPP. Residues 52-243 form a 3 X 4 AA repeats of P-X-X-P region; that stretch reads PMPPFSIPAK…AHSNLGPSRP (192 aa). Residues 60–75 are compositionally biased toward polar residues; it reads AKTSNQNPQTKANLIT. Residues 76 to 79 form repeat 2; the sequence is PQPP. Phosphoserine is present on Ser-103. The segment covering 120–129 has biased composition (polar residues); sequence LQDSVAQSPA. A Phosphothreonine modification is found at Thr-197. Residues 240–243 form repeat 3; it reads PSRP. Residues Ser-245 and Ser-259 each carry the phosphoserine modification. Cys-644 is subject to Cysteine methyl ester. Cys-644 carries the S-farnesyl cysteine lipid modification. A propeptide spans 645–647 (removed in mature form); that stretch reads TVS.

This sequence belongs to the inositol polyphosphate 5-phosphatase family. As to quaternary structure, interacts (when prenylated) with PDE6D; this is important for normal location in cilia. In terms of tissue distribution, highly expressed in testis, in pachytene and diplotene spermatocytes, but not in more mature elongating spermatids. Detected in neurons throughout the brain.

Its subcellular location is the cytoplasm. It is found in the cytoskeleton. The protein localises to the cilium axoneme. It localises to the golgi apparatus. The protein resides in the golgi stack membrane. Its subcellular location is the cell projection. It is found in the ruffle. The protein localises to the cell membrane. It localises to the nucleus. The catalysed reaction is a 1,2-diacyl-sn-glycero-3-phospho-(1D-myo-inositol-4,5-bisphosphate) + H2O = a 1,2-diacyl-sn-glycero-3-phospho-(1D-myo-inositol 4-phosphate) + phosphate. It catalyses the reaction a 1,2-diacyl-sn-glycero-3-phospho-(1D-myo-inositol-3,4,5-trisphosphate) + H2O = a 1,2-diacyl-sn-glycero-3-phospho-(1D-myo-inositol-3,4-bisphosphate) + phosphate. It carries out the reaction a 1,2-diacyl-sn-glycero-3-phospho-(1D-myo-inositol-3,5-bisphosphate) + H2O = a 1,2-diacyl-sn-glycero-3-phospho-(1D-myo-inositol-3-phosphate) + phosphate. In terms of biological role, phosphatidylinositol (PtdIns) phosphatase that specifically hydrolyzes the 5-phosphate of phosphatidylinositol-3,4,5-trisphosphate (PtdIns(3,4,5)P3), phosphatidylinositol 4,5-bisphosphate (PtdIns(4,5)P2) and phosphatidylinositol 3,5-bisphosphate (PtdIns(3,5)P2). Specific for lipid substrates, inactive towards water soluble inositol phosphates. Specific for lipid substrates, inactive towards water soluble inositol phosphates. Plays an essential role in the primary cilium by controlling ciliary growth and phosphoinositide 3-kinase (PI3K) signaling and stability. The sequence is that of Phosphatidylinositol polyphosphate 5-phosphatase type IV (Inpp5e) from Mus musculus (Mouse).